A 354-amino-acid polypeptide reads, in one-letter code: Cysteine proteinase A (354 aa).

Residues 1 to 24 (MARRNPLLFAIVVTILFVVCYGSA) form the signal peptide. Residues 25 to 125 (LIAQTPPPVD…HKEDVHVDDS (101 aa)) constitute a propeptide, activation peptide. Intrachain disulfides connect cysteine 150–cysteine 191, cysteine 184–cysteine 229, and cysteine 282–cysteine 330. The active site involves cysteine 153. Asparagine 208 carries an N-linked (GlcNAc...) asparagine glycan. Active-site residues include histidine 289 and asparagine 309.

Belongs to the peptidase C1 family.

The chain is Cysteine proteinase A (LMCPA) from Leishmania mexicana.